The sequence spans 476 residues: GTPase Der (476 aa).

EngA-type G domains are found at residues 3–167 and 205–380; these read FTVA…GEDM and LRVA…KTWN. GTP-binding positions include 9 to 16, 56 to 60, 119 to 122, 211 to 218, 258 to 262, and 323 to 326; these read GRPNVGKS, DTAGL, NKSE, GRPNAGKS, DTAGM, and NKWD. Positions 381–465 constitute a KH-like domain; the sequence is RRISTAKLNR…PIRVHYRGSD (85 aa).

The protein belongs to the TRAFAC class TrmE-Era-EngA-EngB-Septin-like GTPase superfamily. EngA (Der) GTPase family. In terms of assembly, associates with the 50S ribosomal subunit.

Functionally, GTPase that plays an essential role in the late steps of ribosome biogenesis. The polypeptide is GTPase Der (Agrobacterium fabrum (strain C58 / ATCC 33970) (Agrobacterium tumefaciens (strain C58))).